A 388-amino-acid polypeptide reads, in one-letter code: Cell adhesion molecule 4 (388 aa).

The first 20 residues, 1-20 (MGRARRFQWPLLLLWAAAAG), serve as a signal peptide directing secretion. Residues 21–119 (PGTAQEVQTE…DTHHQIATLT (99 aa)) form the Ig-like V-type domain. Topologically, residues 25–324 (QEVQTENVTV…VEAQTSVPYA (300 aa)) are extracellular. N-linked (GlcNAc...) asparagine glycosylation is found at Asn-31 and Asn-67. 3 cysteine pairs are disulfide-bonded: Cys-44-Cys-104, Cys-145-Cys-199, and Cys-245-Cys-291. Ig-like C2-type domains are found at residues 124–219 (PENP…YVLD) and 224–307 (PTAR…YVLV). The N-linked (GlcNAc...) asparagine glycan is linked to Asn-286. A helical membrane pass occupies residues 325 to 345 (IVGGILALLVFLIICVLVGMV). The Cytoplasmic segment spans residues 346–388 (WCSVRQKGSYLTHEASGLDEQGEAREAFLNGSDGHKRKEEFFI). Position 361 is a phosphoserine (Ser-361).

It belongs to the nectin family. Monomer and homodimer. In terms of processing, N-glycosylated.

It localises to the membrane. In terms of biological role, involved in the cell-cell adhesion. Has calcium- and magnesium-independent cell-cell adhesion activity. May have tumor-suppressor activity. The sequence is that of Cell adhesion molecule 4 (Cadm4) from Rattus norvegicus (Rat).